Consider the following 499-residue polypeptide: Cytochrome P450 77A1 (499 aa).

Position 443 (Cys443) interacts with heme.

Belongs to the cytochrome P450 family. Requires heme as cofactor.

The polypeptide is Cytochrome P450 77A1 (CYP77A1) (Solanum melongena (Eggplant)).